The sequence spans 322 residues: ATP-dependent 6-phosphofructokinase (322 aa).

ATP is bound at residue glycine 11. ADP is bound at residue 21–25 (RAVAR). ATP is bound by residues 72 to 73 (RY) and 102 to 105 (GDGS). Aspartate 103 is a binding site for Mg(2+). 125 to 127 (TID) contacts substrate. Aspartate 127 acts as the Proton acceptor in catalysis. An ADP-binding site is contributed by arginine 154. Substrate contacts are provided by residues arginine 162 and 169–171 (MGR). Residues 185-187 (GAD) and 213-215 (KDY) contribute to the ADP site. Residues glutamate 222, arginine 246, and 252 to 255 (HVQR) contribute to the substrate site.

Belongs to the phosphofructokinase type A (PFKA) family. ATP-dependent PFK group I subfamily. Prokaryotic clade 'B1' sub-subfamily. Homotetramer. Requires Mg(2+) as cofactor.

The protein localises to the cytoplasm. It carries out the reaction beta-D-fructose 6-phosphate + ATP = beta-D-fructose 1,6-bisphosphate + ADP + H(+). It functions in the pathway carbohydrate degradation; glycolysis; D-glyceraldehyde 3-phosphate and glycerone phosphate from D-glucose: step 3/4. Its activity is regulated as follows. Allosterically activated by ADP and other diphosphonucleosides, and allosterically inhibited by phosphoenolpyruvate. Its function is as follows. Catalyzes the phosphorylation of D-fructose 6-phosphate to fructose 1,6-bisphosphate by ATP, the first committing step of glycolysis. This Pediococcus pentosaceus (strain ATCC 25745 / CCUG 21536 / LMG 10740 / 183-1w) protein is ATP-dependent 6-phosphofructokinase.